Here is a 259-residue protein sequence, read N- to C-terminus: Adenosylcobinamide-GDP ribazoletransferase (259 aa).

Helical transmembrane passes span 43 to 63 (LAGAVITAPAGLLLALMLGLG), 64 to 84 (ASSMVAAFAAIGLQVLLTGAL), 116 to 136 (FGVLALVFGVGLRVAALASLV), 141 to 161 (PINVALVMIGIAAVSRALMVW), and 185 to 205 (TLYTALFLGLAVAVVTIAPVT).

This sequence belongs to the CobS family. Mg(2+) serves as cofactor.

It is found in the cell inner membrane. The catalysed reaction is alpha-ribazole + adenosylcob(III)inamide-GDP = adenosylcob(III)alamin + GMP + H(+). It catalyses the reaction alpha-ribazole 5'-phosphate + adenosylcob(III)inamide-GDP = adenosylcob(III)alamin 5'-phosphate + GMP + H(+). Its pathway is cofactor biosynthesis; adenosylcobalamin biosynthesis; adenosylcobalamin from cob(II)yrinate a,c-diamide: step 7/7. Its function is as follows. Joins adenosylcobinamide-GDP and alpha-ribazole to generate adenosylcobalamin (Ado-cobalamin). Also synthesizes adenosylcobalamin 5'-phosphate from adenosylcobinamide-GDP and alpha-ribazole 5'-phosphate. This Allorhizobium ampelinum (strain ATCC BAA-846 / DSM 112012 / S4) (Agrobacterium vitis (strain S4)) protein is Adenosylcobinamide-GDP ribazoletransferase.